The sequence spans 264 residues: tRNA (guanine-N(1)-)-methyltransferase (264 aa).

S-adenosyl-L-methionine contacts are provided by residues glycine 125 and 145–150 (LGDFVL).

Belongs to the RNA methyltransferase TrmD family. In terms of assembly, homodimer.

It is found in the cytoplasm. It carries out the reaction guanosine(37) in tRNA + S-adenosyl-L-methionine = N(1)-methylguanosine(37) in tRNA + S-adenosyl-L-homocysteine + H(+). Its function is as follows. Specifically methylates guanosine-37 in various tRNAs. This Burkholderia cenocepacia (strain ATCC BAA-245 / DSM 16553 / LMG 16656 / NCTC 13227 / J2315 / CF5610) (Burkholderia cepacia (strain J2315)) protein is tRNA (guanine-N(1)-)-methyltransferase.